We begin with the raw amino-acid sequence, 227 residues long: Ribonuclease 3 (227 aa).

Residues 5 to 127 form the RNase III domain; sequence LNALQLRLQH…LIGAVYLDAG (123 aa). E40 contacts Mg(2+). The active site involves D44. 2 residues coordinate Mg(2+): D113 and E116. The active site involves E116. The region spanning 154–224 is the DRBM domain; sequence DAKTALQEWL…ATAMLELLKA (71 aa).

The protein belongs to the ribonuclease III family. As to quaternary structure, homodimer. Requires Mg(2+) as cofactor.

The protein resides in the cytoplasm. It catalyses the reaction Endonucleolytic cleavage to 5'-phosphomonoester.. Its function is as follows. Digests double-stranded RNA. Involved in the processing of primary rRNA transcript to yield the immediate precursors to the large and small rRNAs (23S and 16S). Processes some mRNAs, and tRNAs when they are encoded in the rRNA operon. Processes pre-crRNA and tracrRNA of type II CRISPR loci if present in the organism. In Delftia acidovorans (strain DSM 14801 / SPH-1), this protein is Ribonuclease 3.